The following is a 484-amino-acid chain: tRNA sulfurtransferase (484 aa).

Residues 63-167 (QAFGERLACI…RDKLYMVTKR (105 aa)) form the THUMP domain. ATP is bound by residues 185 to 186 (LI), lysine 267, glycine 289, and glutamine 298. Cysteine 346 and cysteine 458 are oxidised to a cystine. A Rhodanese domain is found at 406–484 (IETNEVVIDI…GYTNVKVYRP (79 aa)). Cysteine 458 (cysteine persulfide intermediate) is an active-site residue.

Belongs to the ThiI family.

The protein resides in the cytoplasm. It catalyses the reaction [ThiI sulfur-carrier protein]-S-sulfanyl-L-cysteine + a uridine in tRNA + 2 reduced [2Fe-2S]-[ferredoxin] + ATP + H(+) = [ThiI sulfur-carrier protein]-L-cysteine + a 4-thiouridine in tRNA + 2 oxidized [2Fe-2S]-[ferredoxin] + AMP + diphosphate. The catalysed reaction is [ThiS sulfur-carrier protein]-C-terminal Gly-Gly-AMP + S-sulfanyl-L-cysteinyl-[cysteine desulfurase] + AH2 = [ThiS sulfur-carrier protein]-C-terminal-Gly-aminoethanethioate + L-cysteinyl-[cysteine desulfurase] + A + AMP + 2 H(+). The protein operates within cofactor biosynthesis; thiamine diphosphate biosynthesis. Functionally, catalyzes the ATP-dependent transfer of a sulfur to tRNA to produce 4-thiouridine in position 8 of tRNAs, which functions as a near-UV photosensor. Also catalyzes the transfer of sulfur to the sulfur carrier protein ThiS, forming ThiS-thiocarboxylate. This is a step in the synthesis of thiazole, in the thiamine biosynthesis pathway. The sulfur is donated as persulfide by IscS. This chain is tRNA sulfurtransferase, found in Shewanella putrefaciens (strain CN-32 / ATCC BAA-453).